The primary structure comprises 288 residues: MTLTLAVYGKGGIGKSTTSCNISTALAKRGKKVLQIGCDPKHDSTFTLTGFLIPTIIDTLQEKDFHYEDIWPEDVIYKGYAGVDCVEAGGPPAGAGCGGYVVGETVKLLKELNAFDEYDVILFDVLGDVVCGGFAAPLNYADYCLIVTDNGFDALFAAKRIAASVREKARTHSLRLAGLIGNRTSKRDLIDKYIEAVPMPVLEILPLIEDIRVSRVKGKTLFEMAESDPSLNYVCDYYLNIADQILSQPEGVVPKDAQDRDLFSLLSDFYLNPTQPASQTKELDLMMV.

ATP is bound by residues 12-17 and lysine 41; that span reads GIGKST. Serine 16 is a binding site for Mg(2+). Cysteine 97 and cysteine 131 together coordinate [4Fe-4S] cluster. Residue 182–183 participates in ATP binding; sequence NR.

Belongs to the NifH/BchL/ChlL family. In terms of assembly, homodimer. Protochlorophyllide reductase is composed of three subunits; ChlL, ChlN and ChlB. It depends on [4Fe-4S] cluster as a cofactor.

It carries out the reaction chlorophyllide a + oxidized 2[4Fe-4S]-[ferredoxin] + 2 ADP + 2 phosphate = protochlorophyllide a + reduced 2[4Fe-4S]-[ferredoxin] + 2 ATP + 2 H2O. It functions in the pathway porphyrin-containing compound metabolism; chlorophyll biosynthesis (light-independent). Its function is as follows. Component of the dark-operative protochlorophyllide reductase (DPOR) that uses Mg-ATP and reduced ferredoxin to reduce ring D of protochlorophyllide (Pchlide) to form chlorophyllide a (Chlide). This reaction is light-independent. The L component serves as a unique electron donor to the NB-component of the complex, and binds Mg-ATP. The chain is Light-independent protochlorophyllide reductase iron-sulfur ATP-binding protein from Synechocystis sp. (strain ATCC 27184 / PCC 6803 / Kazusa).